The following is an 86-amino-acid chain: Anti-adapter protein IraP (86 aa).

The stretch at 1–36 (MKNLIAELLFKLAQKEEESKELCAQVEALEIIVTAM) forms a coiled coil.

Belongs to the IraP family. Interacts with RssB.

It localises to the cytoplasm. Its function is as follows. Inhibits RpoS proteolysis by regulating RssB activity, thereby increasing the stability of the sigma stress factor RpoS especially during phosphate starvation, but also in stationary phase and during nitrogen starvation. Its effect on RpoS stability is due to its interaction with RssB, which probably blocks the interaction of RssB with RpoS, and the consequent delivery of the RssB-RpoS complex to the ClpXP protein degradation pathway. In Escherichia coli O127:H6 (strain E2348/69 / EPEC), this protein is Anti-adapter protein IraP.